The chain runs to 456 residues: Bifunctional protein GlmU (456 aa).

Positions 1–229 are pyrophosphorylase; that stretch reads MLNSAMSVVI…ISETDGVNNR (229 aa). UDP-N-acetyl-alpha-D-glucosamine-binding positions include 11 to 14, Lys25, Gln76, 81 to 82, 103 to 105, Gly140, Glu154, Asn169, and Asn227; these read LAAG, GT, and YGD. Mg(2+) is bound at residue Asp105. Residue Asn227 participates in Mg(2+) binding. The tract at residues 230 to 250 is linker; that stretch reads LQLSRLERIYQAEQAEKLLLS. The N-acetyltransferase stretch occupies residues 251–456; sequence GVMLRDPARF…QGWQRPVKKK (206 aa). Positions 333 and 351 each coordinate UDP-N-acetyl-alpha-D-glucosamine. Residue His363 is the Proton acceptor of the active site. Positions 366 and 377 each coordinate UDP-N-acetyl-alpha-D-glucosamine. Acetyl-CoA-binding positions include Ala380, 386 to 387, Ser405, Ala423, and Arg440; that span reads NY.

In the N-terminal section; belongs to the N-acetylglucosamine-1-phosphate uridyltransferase family. This sequence in the C-terminal section; belongs to the transferase hexapeptide repeat family. As to quaternary structure, homotrimer. It depends on Mg(2+) as a cofactor.

The protein localises to the cytoplasm. The enzyme catalyses alpha-D-glucosamine 1-phosphate + acetyl-CoA = N-acetyl-alpha-D-glucosamine 1-phosphate + CoA + H(+). It carries out the reaction N-acetyl-alpha-D-glucosamine 1-phosphate + UTP + H(+) = UDP-N-acetyl-alpha-D-glucosamine + diphosphate. It functions in the pathway nucleotide-sugar biosynthesis; UDP-N-acetyl-alpha-D-glucosamine biosynthesis; N-acetyl-alpha-D-glucosamine 1-phosphate from alpha-D-glucosamine 6-phosphate (route II): step 2/2. It participates in nucleotide-sugar biosynthesis; UDP-N-acetyl-alpha-D-glucosamine biosynthesis; UDP-N-acetyl-alpha-D-glucosamine from N-acetyl-alpha-D-glucosamine 1-phosphate: step 1/1. The protein operates within bacterial outer membrane biogenesis; LPS lipid A biosynthesis. Its function is as follows. Catalyzes the last two sequential reactions in the de novo biosynthetic pathway for UDP-N-acetylglucosamine (UDP-GlcNAc). The C-terminal domain catalyzes the transfer of acetyl group from acetyl coenzyme A to glucosamine-1-phosphate (GlcN-1-P) to produce N-acetylglucosamine-1-phosphate (GlcNAc-1-P), which is converted into UDP-GlcNAc by the transfer of uridine 5-monophosphate (from uridine 5-triphosphate), a reaction catalyzed by the N-terminal domain. This chain is Bifunctional protein GlmU, found in Salmonella heidelberg (strain SL476).